A 149-amino-acid polypeptide reads, in one-letter code: Histidine-containing phosphotransfer protein 2 (149 aa).

The HPt domain occupies 39–144; that stretch reads TPGFVSEVVT…LQLEQQIQAY (106 aa). His-80 is modified (phosphohistidine).

Two-component system major event consists of a His-to-Asp phosphorelay between a sensor histidine kinase (HK) and a response regulator (RR). In plants, the His-to-Asp phosphorelay involves an additional intermediate named Histidine-containing phosphotransfer protein (HPt). This multistep phosphorelay consists of a His-Asp-His-Asp sequential transfer of a phosphate group between first a His and an Asp of the HK protein, followed by the transfer to a conserved His of the HPt protein and finally the transfer to an Asp in the receiver domain of the RR protein. Widely expressed.

Its subcellular location is the cytoplasm. The protein resides in the cytosol. The protein localises to the nucleus. Functions as a two-component phosphorelay mediators between cytokinin sensor histidine kinases and response regulators (B-type ARRs). Plays an important role in propagating cytokinin signal transduction through the multistep His-to-Asp phosphorelay. Functions as a positive regulator of the cytokinin signaling pathway. May play a regulatory role in salt and drought tolerance during plant development. The sequence is that of Histidine-containing phosphotransfer protein 2 from Oryza sativa subsp. japonica (Rice).